The chain runs to 289 residues: Acetylglutamate kinase (289 aa).

Residues 60 to 61, arginine 82, and asparagine 186 each bind substrate; that span reads GG.

It belongs to the acetylglutamate kinase family. ArgB subfamily.

It is found in the cytoplasm. The catalysed reaction is N-acetyl-L-glutamate + ATP = N-acetyl-L-glutamyl 5-phosphate + ADP. Its pathway is amino-acid biosynthesis; L-arginine biosynthesis; N(2)-acetyl-L-ornithine from L-glutamate: step 2/4. In terms of biological role, catalyzes the ATP-dependent phosphorylation of N-acetyl-L-glutamate. The polypeptide is Acetylglutamate kinase (Methanoculleus marisnigri (strain ATCC 35101 / DSM 1498 / JR1)).